The following is a 200-amino-acid chain: HVA22-like protein k (200 aa).

The disordered stretch occupies residues 176-200 (LGEIANGSPVSETNSDSESDSNHED).

Belongs to the DP1 family.

The sequence is that of HVA22-like protein k (HVA22K) from Arabidopsis thaliana (Mouse-ear cress).